Here is a 418-residue protein sequence, read N- to C-terminus: Aspartate aminotransferase, cytoplasmic (418 aa).

Position 2 is an N-acetylserine (Ser-2). Residues Gly-38, Trp-135, and Asn-188 each coordinate L-aspartate. Lys-255 is modified (N6-(pyridoxal phosphate)lysine). Residue Arg-387 coordinates L-aspartate. Residue Ser-389 is modified to Phosphoserine.

The protein belongs to the class-I pyridoxal-phosphate-dependent aminotransferase family. In terms of assembly, homodimer. Requires pyridoxal 5'-phosphate as cofactor.

The protein resides in the cytoplasm. It is found in the peroxisome. The enzyme catalyses L-aspartate + 2-oxoglutarate = oxaloacetate + L-glutamate. Plays a key role in amino acid metabolism. This Saccharomyces cerevisiae (strain ATCC 204508 / S288c) (Baker's yeast) protein is Aspartate aminotransferase, cytoplasmic (AAT2).